Reading from the N-terminus, the 338-residue chain is Lipoate-protein ligase A (338 aa).

The region spanning 29–216 is the BPL/LPL catalytic domain; the sequence is SPDQRVLFLW…AFFAYYDEQV (188 aa). ATP-binding positions include Arg71, 76 to 79, and Lys134; that span reads GAVF. Position 134 (Lys134) interacts with (R)-lipoate.

The protein belongs to the LplA family. Monomer.

The protein resides in the cytoplasm. The catalysed reaction is L-lysyl-[lipoyl-carrier protein] + (R)-lipoate + ATP = N(6)-[(R)-lipoyl]-L-lysyl-[lipoyl-carrier protein] + AMP + diphosphate + H(+). It functions in the pathway protein modification; protein lipoylation via exogenous pathway; protein N(6)-(lipoyl)lysine from lipoate: step 1/2. The protein operates within protein modification; protein lipoylation via exogenous pathway; protein N(6)-(lipoyl)lysine from lipoate: step 2/2. Catalyzes both the ATP-dependent activation of exogenously supplied lipoate to lipoyl-AMP and the transfer of the activated lipoyl onto the lipoyl domains of lipoate-dependent enzymes. The polypeptide is Lipoate-protein ligase A (Yersinia pseudotuberculosis serotype IB (strain PB1/+)).